We begin with the raw amino-acid sequence, 165 residues long: Crossover junction endodeoxyribonuclease RuvC (165 aa).

Active-site residues include aspartate 8, glutamate 66, and aspartate 138. Mg(2+)-binding residues include aspartate 8, glutamate 66, and aspartate 138.

It belongs to the RuvC family. In terms of assembly, homodimer which binds Holliday junction (HJ) DNA. The HJ becomes 2-fold symmetrical on binding to RuvC with unstacked arms; it has a different conformation from HJ DNA in complex with RuvA. In the full resolvosome a probable DNA-RuvA(4)-RuvB(12)-RuvC(2) complex forms which resolves the HJ. The cofactor is Mg(2+).

Its subcellular location is the cytoplasm. It carries out the reaction Endonucleolytic cleavage at a junction such as a reciprocal single-stranded crossover between two homologous DNA duplexes (Holliday junction).. In terms of biological role, the RuvA-RuvB-RuvC complex processes Holliday junction (HJ) DNA during genetic recombination and DNA repair. Endonuclease that resolves HJ intermediates. Cleaves cruciform DNA by making single-stranded nicks across the HJ at symmetrical positions within the homologous arms, yielding a 5'-phosphate and a 3'-hydroxyl group; requires a central core of homology in the junction. The consensus cleavage sequence is 5'-(A/T)TT(C/G)-3'. Cleavage occurs on the 3'-side of the TT dinucleotide at the point of strand exchange. HJ branch migration catalyzed by RuvA-RuvB allows RuvC to scan DNA until it finds its consensus sequence, where it cleaves and resolves the cruciform DNA. In Methylococcus capsulatus (strain ATCC 33009 / NCIMB 11132 / Bath), this protein is Crossover junction endodeoxyribonuclease RuvC.